A 77-amino-acid polypeptide reads, in one-letter code: Large ribosomal subunit protein bL28 (77 aa).

The tract at residues methionine 1–histidine 20 is disordered.

This sequence belongs to the bacterial ribosomal protein bL28 family.

This is Large ribosomal subunit protein bL28 from Pseudomonas fluorescens (strain SBW25).